The chain runs to 137 residues: Small ribosomal subunit protein uS12 (137 aa).

Disordered stretches follow at residues 1–21 and 33–57; these read MPTI…KSKS and KVQT…TPRK. The residue at position 102 (aspartate 102) is a 3-methylthioaspartic acid.

It belongs to the universal ribosomal protein uS12 family. In terms of assembly, part of the 30S ribosomal subunit. Contacts proteins S8 and S17. May interact with IF1 in the 30S initiation complex.

Functionally, with S4 and S5 plays an important role in translational accuracy. Interacts with and stabilizes bases of the 16S rRNA that are involved in tRNA selection in the A site and with the mRNA backbone. Located at the interface of the 30S and 50S subunits, it traverses the body of the 30S subunit contacting proteins on the other side and probably holding the rRNA structure together. The combined cluster of proteins S8, S12 and S17 appears to hold together the shoulder and platform of the 30S subunit. This chain is Small ribosomal subunit protein uS12, found in Streptococcus pneumoniae (strain ATCC 700669 / Spain 23F-1).